A 116-amino-acid chain; its full sequence is Large ribosomal subunit protein bL17 (116 aa).

This sequence belongs to the bacterial ribosomal protein bL17 family. As to quaternary structure, part of the 50S ribosomal subunit. Contacts protein L32.

The sequence is that of Large ribosomal subunit protein bL17 from Prochlorococcus marinus (strain MIT 9215).